A 132-amino-acid polypeptide reads, in one-letter code: Interleukin-13 (132 aa).

The N-terminal stretch at 1–18 (MALLLTMVIALTCLGGFA) is a signal peptide. 4 N-linked (GlcNAc...) asparagine glycosylation sites follow: Asn-38, Asn-49, Asn-57, and Asn-72. Disulfide bonds link Cys-48/Cys-76 and Cys-64/Cys-90.

This sequence belongs to the IL-4/IL-13 family. As to quaternary structure, interacts with IL13RA2.

It localises to the secreted. In terms of biological role, cytokine that plays important roles in allergic inflammation and immune response to parasite infection. Synergizes with IL2 in regulating interferon-gamma synthesis. Stimulates B-cell proliferation, and activation of eosinophils, basophils, and mast cells. Plays an important role in controlling IL33 activity by modulating the production of transmembrane and soluble forms of interleukin-1 receptor-like 1/IL1RL1. Displays the capacity to antagonize Th1-driven proinflammatory immune response and downregulates synthesis of many proinflammatory cytokines including IL1, IL6, IL10, IL12 and TNF-alpha through a mechanism that partially involves suppression of NF-kappa-B. Also functions on nonhematopoietic cells, including endothelial cells where it induces vascular cell adhesion protein 1/VCAM1, which is important in the recruitment of eosinophils. Exerts its biological effects through its receptors which comprises the IL4R chain and the IL13RA1 chain, to activate JAK1 and TYK2, leading to the activation of STAT6. Aside from IL13RA1, another receptor IL13RA2 acts as a high affinity decoy for IL13 and mediates internalization and depletion of extracellular IL13. This is Interleukin-13 (IL13) from Macaca thibetana (Pere David's macaque).